Reading from the N-terminus, the 308-residue chain is uncharacterized protein (308 aa).

The next 7 membrane-spanning stretches (helical) occupy residues 10-30, 91-111, 115-135, 178-198, 219-239, 251-271, and 288-308; these read IILL…TNLI, LPTI…VVIL, LGLI…LIGI, VIPM…LGLM, ITVL…VDIL, LIVL…KHSI, and INYT…IAFF.

The protein to M.jannaschii MJ0871, MJ1556 and MJ1589.

The protein localises to the cell membrane. This is an uncharacterized protein from Methanocaldococcus jannaschii (strain ATCC 43067 / DSM 2661 / JAL-1 / JCM 10045 / NBRC 100440) (Methanococcus jannaschii).